Reading from the N-terminus, the 402-residue chain is MGIYDIFDDESARSISGMSIDEMAKKYGTPVIIYSRARIVSNIRRIREAYENRVRMLYSVKANDNPRIIEIMHQESIGSDSASPMEIMMSIFSGIPPEDILYSPNNASEYDLNFALDRGIAINFNTFTQYRKMREKPERISFRINPGFGMGEFAGTTTGGARTKFGIDPDAAILAYRKAREDGIREFGIHMMIGSNNRDHVKIAEAYSNFFRIADRIGREAGVSFQFADVGGGLGIPYVQGENELDIAALGSAVLKEFDRYHFGDLVLEPGRYLVGDAGIIVGTVNDVHNGFAGTDIGMNLNIRPALYGARHTIIPVGERVEGEKITVTGQICENTDRIGDTAWRLSEGDRIMVLDAGAYVYSMSSRYNGRPRPPEIMIMEDGKDVMIRRREDFSDFIATVV.

Lysine 61 is modified (N6-(pyridoxal phosphate)lysine). Residues glycine 233 and 269–272 (EPGR) contribute to the pyridoxal 5'-phosphate site. Substrate is bound by residues arginine 272, arginine 304, tyrosine 308, glutamate 334, and tyrosine 360. Residue tyrosine 360 coordinates pyridoxal 5'-phosphate.

This sequence belongs to the Orn/Lys/Arg decarboxylase class-II family. LysA subfamily. Homodimer. The cofactor is pyridoxal 5'-phosphate.

The catalysed reaction is meso-2,6-diaminopimelate + H(+) = L-lysine + CO2. It participates in amino-acid biosynthesis; L-lysine biosynthesis via DAP pathway; L-lysine from DL-2,6-diaminopimelate: step 1/1. Its function is as follows. Specifically catalyzes the decarboxylation of meso-diaminopimelate (meso-DAP) to L-lysine. The polypeptide is Diaminopimelate decarboxylase (Thermoplasma acidophilum (strain ATCC 25905 / DSM 1728 / JCM 9062 / NBRC 15155 / AMRC-C165)).